The chain runs to 197 residues: Na(+)-translocating NADH-quinone reductase subunit E (197 aa).

A run of 6 helical transmembrane segments spans residues serine 11–valine 31, valine 35–alanine 55, phenylalanine 76–phenylalanine 96, leucine 108–methionine 128, valine 139–isoleucine 159, and leucine 175–isoleucine 195.

This sequence belongs to the NqrDE/RnfAE family. As to quaternary structure, composed of six subunits; NqrA, NqrB, NqrC, NqrD, NqrE and NqrF.

The protein localises to the cell inner membrane. The enzyme catalyses a ubiquinone + n Na(+)(in) + NADH + H(+) = a ubiquinol + n Na(+)(out) + NAD(+). Functionally, NQR complex catalyzes the reduction of ubiquinone-1 to ubiquinol by two successive reactions, coupled with the transport of Na(+) ions from the cytoplasm to the periplasm. NqrA to NqrE are probably involved in the second step, the conversion of ubisemiquinone to ubiquinol. This chain is Na(+)-translocating NADH-quinone reductase subunit E, found in Neisseria meningitidis serogroup A / serotype 4A (strain DSM 15465 / Z2491).